The chain runs to 284 residues: Pseudopaline exporter CntI (284 aa).

The next 10 helical transmembrane spans lie at 2–22, 34–54, 74–94, 96–116, 122–142, 147–167, 179–199, 209–229, 236–256, and 259–279; these read VLDLLKSGVLLAVLASFTFSV, LPAAEIVFFRSAIGTLLIYLL, GVMGALYLVCYFYAIAHIPLA, ASILAHMSPFFVILFSALFLG, AVYWLLLVVVLGALMIVKPFS, SVYAVVGLLSAVFAAGASVAI, IVFYFLAVATLVAIPLMWSDF, GLLLAIGVVSLLGQVFLTRAF, IVAVTRYIGIVFNAGWGWLFW, and VPDALTIAGGVLIVVACIALS. 2 EamA domains span residues 8 to 138 and 151 to 279; these read SGVL…LMIV and VVGL…IALS.

The protein belongs to the EamA transporter family.

It is found in the cell inner membrane. In terms of biological role, transports the metallophore pseudopaline, which is involved in the acquisition of nickel and zinc, and thus enables bacterial growth inside the host, where metal access is limited. Is probably involved in the export of pseudopaline. This Pseudomonas aeruginosa (strain UCBPP-PA14) protein is Pseudopaline exporter CntI.